The sequence spans 1041 residues: Toll-like receptor 8 (1041 aa).

The first 26 residues, 1–26 (MENMFLQSSMLTCIFLLISGSCELCA), serve as a signal peptide directing secretion. The Extracellular segment spans residues 27-827 (EENFSRSYPC…ELTTCVSDVT (801 aa)). N-linked (GlcNAc...) asparagine glycosylation is found at N29, N42, N80, N88, and N115. A disulfide bridge links C36 with C49. 6 LRR repeats span residues 126 to 147 (NLRELLLEDNQLPQIPSGLPES), 148 to 168 (LTELSLIQNNIYNITKEGISR), 171 to 193 (NLKNLYLAWNCYFNKVCEKTNIE), 202 to 223 (NLELLSLSFNSLSHVPPKLPSS), 224 to 244 (LRKLFLSNTQIKYISEEDFKG), and 247 to 268 (NLTLLDLSGNCPRCFNAPFPCV). N160 carries N-linked (GlcNAc...) asparagine glycosylation. An intrachain disulfide couples C181 to C187. N247 carries an N-linked (GlcNAc...) asparagine glycan. Disulfide bonds link C257–C270 and C260–C267. Residues N285 and N293 are each glycosylated (N-linked (GlcNAc...) asparagine). 3 LRR repeats span residues 288-309 (QLRYLNLSSTSLRKINAAWFKN), 312-334 (HLKVLDLEFNYLVGEIASGAFLT), and 338-360 (RLEILDLSFNYIKGSYPQHINIS). N-linked (GlcNAc...) asparagine glycosylation is found at N358 and N362. LRR repeat units lie at residues 368 to 389 (SLRALHLRGYVFQELREDDFQP), 395 to 416 (NLSTINLGINFIKQIDFKLFQN), and 419 to 440 (NLEIIYLSENRISPLVKDTRQS). 2 N-linked (GlcNAc...) asparagine glycosylation sites follow: N395 and N416. N443 is a glycosylation site (N-linked (GlcNAc...) asparagine). A disulfide bridge connects residues C479 and C509. 4 LRR repeats span residues 482-503 (YGKALDLSLNSIFFIGPNQFEN), 506-527 (DIACLNLSANSNAQVLSGTEFS), 531-551 (HVKYLDLTNNRLDFDNASALT), and 555-577 (DLEVLDLSYNSHYFRIAGVTHHL). N-linked (GlcNAc...) asparagine glycans are attached at residues N511 and N546. N-linked (GlcNAc...) asparagine glycosylation is found at N582 and N590. LRR repeat units lie at residues 585-606 (NLKVLNLSHNNIYTLTDKYNLE), 609-630 (SLVELVFSGNRLDILWNDDDNR), 640-661 (NLTRLDLSLNRLKHIPNEAFLN), 665-685 (SLTELHINDNMLKFFNWTLLQ), 689-710 (RLELLDLRGNKLLFLTDSLSDF), 713-734 (SLRTLLLSHNRISHLPSGFLSE), and 737-758 (SLKHLDLSSNLLKTINKSALET). N640 and N680 each carry an N-linked (GlcNAc...) asparagine glycan. N-linked (GlcNAc...) asparagine glycosylation occurs at N752. The 53-residue stretch at 772–824 (NPFECTCDIGDFRRWMDEHLNVKIPRLVDVICASPGDQRGKSIVSLELTTCVS) folds into the LRRCT domain. Cysteines 776 and 803 form a disulfide. Residues 828 to 848 (AVILFFFTFFITTMVMLAALA) form a helical membrane-spanning segment. Residues 849–1041 (HHLFYWDVWF…NMYVDSIKQY (193 aa)) are Cytoplasmic-facing. One can recognise a TIR domain in the interval 878–1022 (TFYDAYISYD…LFWQTLRNVV (145 aa)).

Belongs to the Toll-like receptor family. In terms of assembly, homodimer. Interacts with MYD88 via their respective TIR domains. Interacts with UNC93B1. Interacts with BTK. Interacts with SMPDL3B. Post-translationally, ubiquitinated by RNF216; leading to degradation by the proteasome. Proteolytic processing occurs in monocytes and monocyte-derived macrophages by both furin-like proprotein convertase and cathepsins. The cleavage is necessary for dimer formation and subsequent activation. In terms of tissue distribution, expressed in myeloid dendritic cells, monocytes, and monocyte-derived dendritic cells.

It is found in the endosome membrane. Activated by RNAs having enough uridines. Endosomal receptor that plays a key role in innate and adaptive immunity. Controls host immune response against pathogens through recognition of RNA degradation products specific to microorganisms that are initially processed by RNASET2. Recognizes GU-rich single-stranded RNA (GU-rich RNA) derived from SARS-CoV-2, SARS-CoV-1 and HIV-1 viruses. Upon binding to agonists, undergoes dimerization that brings TIR domains from the two molecules into direct contact, leading to the recruitment of TIR-containing downstream adapter MYD88 through homotypic interaction. In turn, the Myddosome signaling complex is formed involving IRAK4, IRAK1, TRAF6, TRAF3 leading to activation of downstream transcription factors NF-kappa-B and IRF7 to induce pro-inflammatory cytokines and interferons, respectively. The chain is Toll-like receptor 8 from Homo sapiens (Human).